We begin with the raw amino-acid sequence, 348 residues long: 3',5'-cyclic-nucleotide phosphodiesterase (348 aa).

Requires Mn(2+) as cofactor.

It catalyses the reaction a nucleoside 3',5'-cyclic phosphate + H2O = a nucleoside 5'-phosphate + H(+). Hydrolyzes cAMP to 5'-AMP and cGMP to 5'-GMP. Does not show phosphohydrolase activity toward various phosphatidylcholine and phosphorylated sugars. This is 3',5'-cyclic-nucleotide phosphodiesterase from Helicobacter pylori (strain ATCC 700392 / 26695) (Campylobacter pylori).